Reading from the N-terminus, the 132-residue chain is Thioredoxin H4-2 (132 aa).

Residues 18-130 (DFKGGNVHVI…LEKKVQALAD (113 aa)) enclose the Thioredoxin domain. Catalysis depends on nucleophile residues cysteine 56 and cysteine 59. A disulfide bond links cysteine 56 and cysteine 59.

Belongs to the thioredoxin family. Plant H-type subfamily.

The protein resides in the cytoplasm. In terms of biological role, probable thiol-disulfide oxidoreductase that may be involved in the redox regulation of a number of cytosolic enzymes. The sequence is that of Thioredoxin H4-2 from Oryza sativa subsp. japonica (Rice).